Reading from the N-terminus, the 362-residue chain is Phospho-N-acetylmuramoyl-pentapeptide-transferase (362 aa).

10 helical membrane-spanning segments follow: residues 28–48, 73–93, 100–120, 134–154, 169–189, 201–221, 241–261, 264–284, 290–310, and 339–359; these read GATV…IALL, TPTM…LLWA, VWIV…DDYL, VKLF…VLVS, TLLI…IVGS, GLAI…VYLV, LAVF…YNAP, MVFM…AIAV, LVLA…IVQV, and TVVV…LATL.

The protein belongs to the glycosyltransferase 4 family. MraY subfamily. Mg(2+) is required as a cofactor.

It localises to the cell inner membrane. The catalysed reaction is UDP-N-acetyl-alpha-D-muramoyl-L-alanyl-gamma-D-glutamyl-meso-2,6-diaminopimeloyl-D-alanyl-D-alanine + di-trans,octa-cis-undecaprenyl phosphate = di-trans,octa-cis-undecaprenyl diphospho-N-acetyl-alpha-D-muramoyl-L-alanyl-D-glutamyl-meso-2,6-diaminopimeloyl-D-alanyl-D-alanine + UMP. Its pathway is cell wall biogenesis; peptidoglycan biosynthesis. Functionally, catalyzes the initial step of the lipid cycle reactions in the biosynthesis of the cell wall peptidoglycan: transfers peptidoglycan precursor phospho-MurNAc-pentapeptide from UDP-MurNAc-pentapeptide onto the lipid carrier undecaprenyl phosphate, yielding undecaprenyl-pyrophosphoryl-MurNAc-pentapeptide, known as lipid I. This chain is Phospho-N-acetylmuramoyl-pentapeptide-transferase, found in Parvibaculum lavamentivorans (strain DS-1 / DSM 13023 / NCIMB 13966).